Here is a 775-residue protein sequence, read N- to C-terminus: Probable ubiquitin carboxyl-terminal hydrolase creB (775 aa).

Residues 1-45 are disordered; it reads MGSFLRSFRHNGGSTAPSVGAVPAKKEPQPPPMTPLEKRLLDMGP. Residues 36-45 show a composition bias toward basic and acidic residues; the sequence is LEKRLLDMGP. The USP domain maps to 55-468; that stretch reads YGMENYGNTC…CAYVLFYQET (414 aa). Residue Cys64 is the Nucleophile of the active site. Disordered stretches follow at residues 113 to 146 and 238 to 269; these read EAEAQAEKQKAANAQRPGMPPNPQQKPEDKDSPE and ASKQPPIEKSLPAPETADSVDQSSSTGSKTPN. The span at 256–269 shows a compositional bias: polar residues; that stretch reads SVDQSSSTGSKTPN. His419 serves as the catalytic Proton acceptor. The interval 496-775 is disordered; that stretch reads LKQNGFPQSP…LRKKSFSILS (280 aa). 2 stretches are compositionally biased toward low complexity: residues 546–566 and 576–585; these read ESAPFSPLSPLSPLSPLSPLS and ERVTTVATPP. Residues 586–653 adopt a coiled-coil conformation; that stretch reads KNDALAKKER…ASKAEEDRRL (68 aa). The segment covering 589–662 has biased composition (basic and acidic residues); that stretch reads ALAKKERARE…LSHENGKEKQ (74 aa). The span at 668-679 shows a compositional bias: basic residues; that stretch reads RLKRGSKSLSHR. The span at 705 to 725 shows a compositional bias: low complexity; it reads SQTGPTSEQQQQQQQQQSPPN. The segment covering 739-757 has biased composition (basic and acidic residues); it reads TIREDEQVNHKDSKHERTG. A compositionally biased stretch (basic residues) spans 758-775; the sequence is HGKWRSFSLRKKSFSILS.

This sequence belongs to the peptidase C19 family. Interacts with creA, creC and qutD.

The catalysed reaction is Thiol-dependent hydrolysis of ester, thioester, amide, peptide and isopeptide bonds formed by the C-terminal Gly of ubiquitin (a 76-residue protein attached to proteins as an intracellular targeting signal).. Functionally, ubiquitin thioesterase component of the regulatory network controlling carbon source utilization through ubiquitination and deubiquitination involving creA, creB, creC, creD and acrB. Deubiquitinates the creA catabolic repressor and the quinate permease qutD. Also plays a role in response to carbon starvation and the control of extracellular proteases activity. This is Probable ubiquitin carboxyl-terminal hydrolase creB (creB) from Aspergillus fumigatus (strain ATCC MYA-4609 / CBS 101355 / FGSC A1100 / Af293) (Neosartorya fumigata).